The following is an 84-amino-acid chain: Small ribosomal subunit protein uS17 (84 aa).

Belongs to the universal ribosomal protein uS17 family. As to quaternary structure, part of the 30S ribosomal subunit.

Its function is as follows. One of the primary rRNA binding proteins, it binds specifically to the 5'-end of 16S ribosomal RNA. The polypeptide is Small ribosomal subunit protein uS17 (Actinobacillus pleuropneumoniae serotype 5b (strain L20)).